We begin with the raw amino-acid sequence, 583 residues long: Poly [ADP-ribose] polymerase 2 (583 aa).

Residues 1-77 (MAARRRRSTG…GMPGRSWASK (77 aa)) form a disordered region. Residues 1-103 (MAARRRRSTG…VDPECTAKVG (103 aa)) are N-terminal region (NTR). Short sequence motifs (nuclear localization signal) lie at residues 21-22 (KR) and 35-40 (PAKKTR). N6-acetyllysine occurs at positions 37 and 38. Positions 57–67 (ANKDRTEDKQD) are enriched in basic and acidic residues. The 98-residue stretch at 104–201 (KAHVYCEGND…EKFEKVPGKY (98 aa)) folds into the WGR domain. Phosphoserine is present on residues Ser226 and Ser232. One can recognise a PARP alpha-helical domain in the interval 231–348 (ESQLDLRVQE…DIEIAIKLVK (118 aa)). The 228-residue stretch at 356–583 (HPLDQHYRNL…KVQFNFLQLW (228 aa)) folds into the PARP catalytic domain. NAD(+) is bound by residues 428–430 (HGS), Gly437, Arg444, and Ser470. Glu558 (for poly [ADP-ribose] polymerase activity) is an active-site residue.

This sequence belongs to the ARTD/PARP family. As to quaternary structure, component of a base excision repair (BER) complex, containing at least XRCC1, PARP1, POLB and LRIG3. Homo- and heterodimer with PARP1. Interacts (via the PARP catalytic domain) with HPF1. Interacts with core nucleosomes. Auto poly-ADP-ribosylated on serine residues, leading to dissociation of the PARP2-HPF1 complex from chromatin. Poly-ADP-ribosylated by PARP1. In terms of processing, acetylation reduces DNA binding and enzymatic activity. Post-translationally, proteolytically cleaved by caspase-8 (CASP8) in response to apoptosis, leading to its inactivation. Widely expressed, mainly in actively dividing tissues. The highest levels are in the brain, heart, pancreas, skeletal muscle and testis; also detected in kidney, liver, lung, placenta, ovary and spleen; levels are low in leukocytes, colon, small intestine, prostate and thymus.

The protein localises to the nucleus. It localises to the chromosome. It catalyses the reaction NAD(+) + (ADP-D-ribosyl)n-acceptor = nicotinamide + (ADP-D-ribosyl)n+1-acceptor + H(+).. It carries out the reaction L-seryl-[protein] + NAD(+) = O-(ADP-D-ribosyl)-L-seryl-[protein] + nicotinamide + H(+). The enzyme catalyses L-aspartyl-[protein] + NAD(+) = 4-O-(ADP-D-ribosyl)-L-aspartyl-[protein] + nicotinamide. The catalysed reaction is L-glutamyl-[protein] + NAD(+) = 5-O-(ADP-D-ribosyl)-L-glutamyl-[protein] + nicotinamide. ADP-ribosyltransferase activity is regulated via an allosteric activation mechanism. In absence of activation signal, PARP2 is autoinhibited by the PARP alpha-helical domain (also named HD region), which prevents effective NAD(+)-binding. Activity is highly stimulated by signals, which unfold the PARP alpha-helical domain, relieving autoinhibition. Poly-ADP-ribosyltransferase activity is tightly regulated and PARP2 is removed from damaged chromatin following initial poly-ADP-ribosylation of chromatin to avoid prolonged residence (trapping) that has cytotoxic consequences. CHD1L promotes PARP2 removal from chromatin. ADP-ribosyltransferase activity is inhibited by a number of PARP inhibitors (PARPi) compounds, that are used the treatment of breast or ovarian cancers that have defects in DNA repair by homologous recombination. PARPi molecules (niraparib, talazoparib, and, to a lesser extent, olaparib) also trap PARP2 at DNA damage sites. Its function is as follows. Poly-ADP-ribosyltransferase that mediates poly-ADP-ribosylation of proteins and plays a key role in DNA repair. Mediates glutamate, aspartate or serine ADP-ribosylation of proteins: the ADP-D-ribosyl group of NAD(+) is transferred to the acceptor carboxyl group of target residues and further ADP-ribosyl groups are transferred to the 2'-position of the terminal adenosine moiety, building up a polymer with an average chain length of 20-30 units. Serine ADP-ribosylation of proteins constitutes the primary form of ADP-ribosylation of proteins in response to DNA damage. Mediates glutamate and aspartate ADP-ribosylation of target proteins in absence of HPF1. Following interaction with HPF1, catalyzes serine ADP-ribosylation of target proteins; HPF1 conferring serine specificity by completing the PARP2 active site. PARP2 initiates the repair of double-strand DNA breaks: recognizes and binds DNA breaks within chromatin and recruits HPF1, licensing serine ADP-ribosylation of target proteins, such as histones, thereby promoting decompaction of chromatin and the recruitment of repair factors leading to the reparation of DNA strand breaks. HPF1 initiates serine ADP-ribosylation but restricts the polymerase activity of PARP2 in order to limit the length of poly-ADP-ribose chains. Specifically mediates formation of branched poly-ADP-ribosylation. Branched poly-ADP-ribose chains are specifically recognized by some factors, such as APLF. In addition to proteins, also able to ADP-ribosylate DNA: preferentially acts on 5'-terminal phosphates at DNA strand breaks termini in nicked duplex. This Homo sapiens (Human) protein is Poly [ADP-ribose] polymerase 2.